The sequence spans 143 residues: MPASKEQTDEMKEAFVLYDIDKDGLIPTSHVGSVLRSLGINVTDAELAKLSNELGDAIDEKKFMSFVSNKLRETESEEEYIKAFRVFDKDNSGYIETAKFADYMKTLGEKLSDNEVQLMVQEADPTNSGSFDYYDFVQRIMAK.

3 consecutive EF-hand domains span residues 6–41 (EQTD…LGIN), 75–110 (ESEE…LGEK), and 111–143 (LSDN…IMAK).

It belongs to the calmodulin family. Interacts with myo1 and pik1.

The protein localises to the cytoplasm. The protein resides in the prospore membrane. Its function is as follows. Plays a role in meiosis and sporulation. The polypeptide is Myosin 1 light chain cam2 (Schizosaccharomyces pombe (strain 972 / ATCC 24843) (Fission yeast)).